A 38-amino-acid chain; its full sequence is Plastocyanin (38 aa).

Positions 1–38 (AQTVEVKMGADGGLLVFEPAKAGPHNVVFDEDNIPPGV) constitute a Plastocyanin-like domain. A Cu cation-binding site is contributed by His25.

Belongs to the plastocyanin family. Cu(2+) is required as a cofactor.

The protein resides in the plastid. Its subcellular location is the chloroplast thylakoid membrane. Its function is as follows. Participates in electron transfer between P700 and the cytochrome b6-f complex in photosystem I. The sequence is that of Plastocyanin (PETE) from Thalassiosira oceanica (Marine diatom).